The sequence spans 561 residues: Putative transport protein CKO_02260 (561 aa).

The next 5 helical transmembrane spans lie at 8-28 (LLNG…LCLG), 32-52 (LGSV…LLGQ), 66-86 (FMLF…SIFF), 94-114 (MLAL…GKLF), and 158-178 (NLSL…IVGA). RCK C-terminal domains follow at residues 200 to 288 (RGLD…SFRN) and 292 to 373 (VFDR…RIGF). The next 5 helical transmembrane spans lie at 383–403 (LLAF…TFQF), 406–426 (FSFG…LGFL), 447–467 (FGLM…IGNG), 475–495 (MLIA…LFGA), and 540–560 (AIAN…WPGL).

Belongs to the AAE transporter (TC 2.A.81) family. YbjL subfamily.

It is found in the cell membrane. The chain is Putative transport protein CKO_02260 from Citrobacter koseri (strain ATCC BAA-895 / CDC 4225-83 / SGSC4696).